The primary structure comprises 249 residues: O-methyltransferase adaD (249 aa).

Residues 1–15 (MSSVTLTTTTTTTST) are compositionally biased toward low complexity. Residues 1-26 (MSSVTLTTTTTTTSTPPKPTPKDEPQ) form a disordered region.

Belongs to the methyltransferase superfamily.

It catalyses the reaction 2-acetyl-3,4a,8,10,11,12a-hexahydroxy-1,4,4a,5,12,12a-hexahydrotetracene-1,12-dione + S-adenosyl-L-methionine = TAN-1612 + S-adenosyl-L-homocysteine + H(+). It functions in the pathway secondary metabolite biosynthesis. Its function is as follows. O-methyltransferase; part of the gene cluster that mediates the biosynthesis of the linear tetracyclic TAN-1612 neuropeptide Y receptor antagonist. The decaketide backbone of TAN-1612 is synthesized by the non-reducing polyketide synthase adaA via condensation of one acetyl-CoA starter unit with 9 malonyl-CoA units. The FAD-dependent monooxygenase adaC then performs hydroxylation at C2 while the polaketide chain is still attached to the NRPKS adaA. The alpha-hydroxylation step at C2 appears to be crucial for the following C18-C1 Claisen cyclization and release of the C9-hydroxyl version of TAN-1612 from the NRPKS adaA, two steps performed by the lactamase-like protein adaB. Finally, the O-methyltransferase adaD performs the C9 O-methylation to complete the biosynthesis of TAN-1612. The protein is O-methyltransferase adaD of Aspergillus niger (strain ATCC MYA-4892 / CBS 513.88 / FGSC A1513).